A 215-amino-acid polypeptide reads, in one-letter code: Late embryogenesis abundant protein 14 (215 aa).

Disordered stretches follow at residues 1 to 129 and 190 to 215; these read MASQ…GQTG and SGDN…SDYQ. Composition is skewed to basic and acidic residues over residues 13–24, 32–41, 54–81, and 88–111; these read GETKARAEEKTG, EKAREAKDTA, GAKE…KDAA, and AMDK…DRAA. Over residues 192 to 215 the composition is skewed to polar residues; it reads DNKNNAAAGKDTSTYKPGTGSDYQ.

Belongs to the LEA type 4 family. As to expression, expressed in the shoot apex and leaves. Expressed in dry seeds. Expressed in roots and leaves.

Its subcellular location is the nucleus. The protein is Late embryogenesis abundant protein 14 of Oryza sativa subsp. japonica (Rice).